The primary structure comprises 159 residues: Succinate dehydrogenase [ubiquinone] cytochrome b small subunit, mitochondrial (159 aa).

The N-terminal 30 residues, 1-30 (MLQTRLGLGALRQGRLLFAVKSFSTTSVAK), are a transit peptide targeting the mitochondrion. The Mitochondrial matrix portion of the chain corresponds to 31-65 (IFPPPPQTIKGTVNDAAVFPHHSKLHGSYHWDFER). Residues 66–82 (IIAIAMVPQVMIPLFTG) form a helical membrane-spanning segment. Topologically, residues 83–89 (TSHPLMD) are mitochondrial intermembrane. A helical membrane pass occupies residues 90 to 109 (AALACTLITHAHLGFESCVI). Histidine 99 serves as a coordination point for heme. The Mitochondrial matrix portion of the chain corresponds to 110 to 122 (DYFPARRFKKLSP). Tyrosine 111 contacts a ubiquinone. The helical transmembrane segment at 123-140 (LMHWILRGCTVLTLIGVY) threads the bilayer. The Mitochondrial intermembrane segment spans residues 141-159 (EFNTNDIGLTEGIKKLWKS).

It belongs to the CybS family. In terms of assembly, forms part of complex II containing four subunits: a flavoprotein (FP), an iron-sulfur protein (IP) and a cytochrome b composed of a large and a small subunit.

It localises to the mitochondrion inner membrane. Its pathway is carbohydrate metabolism; tricarboxylic acid cycle. In terms of biological role, membrane-anchoring subunit of succinate dehydrogenase (SDH) that is involved in complex II of the mitochondrial electron transport chain and is responsible for transferring electrons from succinate to ubiquinone (coenzyme Q). In Schizosaccharomyces pombe (strain 972 / ATCC 24843) (Fission yeast), this protein is Succinate dehydrogenase [ubiquinone] cytochrome b small subunit, mitochondrial (sdh4).